The chain runs to 93 residues: Ribonuclease P protein component 1 (93 aa).

It belongs to the eukaryotic/archaeal RNase P protein component 1 family. In terms of assembly, consists of a catalytic RNA component and at least 4-5 protein subunits.

Its subcellular location is the cytoplasm. The enzyme catalyses Endonucleolytic cleavage of RNA, removing 5'-extranucleotides from tRNA precursor.. Functionally, part of ribonuclease P, a protein complex that generates mature tRNA molecules by cleaving their 5'-ends. The chain is Ribonuclease P protein component 1 from Methanosphaera stadtmanae (strain ATCC 43021 / DSM 3091 / JCM 11832 / MCB-3).